The following is a 514-amino-acid chain: MAGGFVSQTPGVRNYNYKLTPKVFVTCFIGAFGGLIFGYDLGISGGVTSMEPFLEEFFPYVYKKMKSAHENEYCRFDSQLLTLFTSSLYVAALVSSLFASTITRVFGRKWSMFLGGFTFFIGSAFNGFAQNIAMLLIGRILLGFGVGFANQSVPVYLSEMAPPNLRGAFNNGFQVAIIFGIVVATIINYFTAQMKGNIGWRISLGLACVPAVMIMIGALILPDTPNSLIERGYTEEAKEMLQSIRGTNEVDEEFQDLIDASEESKQVKHPWKNIMLPRYRPQLIMTCFIPFFQQLTGINVITFYAPVLFQTLGFGSKASLLSAMVTGIIELLCTFVSVFTVDRFGRRILFLQGGIQMLVSQIAIGAMIGVKFGVAGTGNIGKSDANLIVALICIYVAGFAWSWGPLGWLVPSEISPLEIRSAAQAINVSVNMFFTFLVAQLFLTMLCHMKFGLFFFFAFFVVIMTIFIYLMLPETKNVPIEEMNRVWKAHWFWGKFIPDEAVNMGAAEMQQKSV.

Over 1-22 the chain is Cytoplasmic; sequence MAGGFVSQTPGVRNYNYKLTPK. 12 consecutive transmembrane segments (helical) span residues 23–43, 80–100, 117–137, 140–160, 172–192, 202–222, 283–303, 321–341, 348–368, 387–407, 426–446, and 451–471; these read VFVTCFIGAFGGLIFGYDLGI, LLTLFTSSLYVAALVSSLFAS, FTFFIGSAFNGFAQNIAMLLI, ILLGFGVGFANQSVPVYLSEM, GFQVAIIFGIVVATIINYFTA, ISLGLACVPAVMIMIGALILP, LIMTCFIPFFQQLTGINVITF, LSAMVTGIIELLCTFVSVFTV, ILFLQGGIQMLVSQIAIGAMI, LIVALICIYVAGFAWSWGPLG, INVSVNMFFTFLVAQLFLTML, and FGLFFFFAFFVVIMTIFIYLM. At 472–514 the chain is on the cytoplasmic side; sequence LPETKNVPIEEMNRVWKAHWFWGKFIPDEAVNMGAAEMQQKSV.

It belongs to the major facilitator superfamily. Sugar transporter (TC 2.A.1.1) family. In terms of tissue distribution, mostly in flowers and roots, especially in anthers, including pollen, and root tips. Also present in some hydathodes.

Its subcellular location is the cell membrane. In terms of biological role, mediates an active uptake of hexoses, probably by sugar/hydrogen symport. Can transport glucose, methylglucose, galactose, xylose and mannose, but not fructose. In Arabidopsis thaliana (Mouse-ear cress), this protein is Sugar transport protein 4 (STP4).